The primary structure comprises 396 residues: S-adenosylmethionine synthase (396 aa).

His-16 lines the ATP pocket. Residue Asp-18 coordinates Mg(2+). Position 44 (Glu-44) interacts with K(+). 2 residues coordinate L-methionine: Glu-57 and Gln-100. The interval 100–110 (QSVDIAQGVDR) is flexible loop. Residues 165–167 (DAK), 231–232 (KF), Asp-240, 246–247 (RK), Ala-263, and Lys-267 contribute to the ATP site. Asp-240 contacts L-methionine. Residue Lys-271 coordinates L-methionine.

It belongs to the AdoMet synthase family. As to quaternary structure, homotetramer; dimer of dimers. Mg(2+) serves as cofactor. K(+) is required as a cofactor.

Its subcellular location is the cytoplasm. The catalysed reaction is L-methionine + ATP + H2O = S-adenosyl-L-methionine + phosphate + diphosphate. It participates in amino-acid biosynthesis; S-adenosyl-L-methionine biosynthesis; S-adenosyl-L-methionine from L-methionine: step 1/1. Catalyzes the formation of S-adenosylmethionine (AdoMet) from methionine and ATP. The overall synthetic reaction is composed of two sequential steps, AdoMet formation and the subsequent tripolyphosphate hydrolysis which occurs prior to release of AdoMet from the enzyme. The sequence is that of S-adenosylmethionine synthase from Marinobacter nauticus (strain ATCC 700491 / DSM 11845 / VT8) (Marinobacter aquaeolei).